The primary structure comprises 86 residues: Large ribosomal subunit protein bL28 (86 aa).

It belongs to the bacterial ribosomal protein bL28 family.

The protein is Large ribosomal subunit protein bL28 of Phocaeicola vulgatus (strain ATCC 8482 / DSM 1447 / JCM 5826 / CCUG 4940 / NBRC 14291 / NCTC 11154) (Bacteroides vulgatus).